A 307-amino-acid polypeptide reads, in one-letter code: D-alanine--D-alanine ligase (307 aa).

The 200-residue stretch at 105–304 folds into the ATP-grasp domain; the sequence is KMLWKGFGLP…FEQLVVKILE (200 aa). ATP is bound at residue 135–190; that stretch reads VERLGLPLMVKPSREGSSVGLTKVNAVEELKNAVDLALTHDDTVLIEEWLSGIEMT. Mg(2+)-binding residues include aspartate 258, glutamate 271, and asparagine 273.

This sequence belongs to the D-alanine--D-alanine ligase family. Requires Mg(2+) as cofactor. Mn(2+) is required as a cofactor.

The protein localises to the cytoplasm. The enzyme catalyses 2 D-alanine + ATP = D-alanyl-D-alanine + ADP + phosphate + H(+). It functions in the pathway cell wall biogenesis; peptidoglycan biosynthesis. In terms of biological role, cell wall formation. The sequence is that of D-alanine--D-alanine ligase from Mannheimia succiniciproducens (strain KCTC 0769BP / MBEL55E).